The sequence spans 726 residues: ORC ubiquitin ligase 1 (726 aa).

The RING-type; degenerate zinc-finger motif lies at 18-56 (CHICLGKVRQPVICINNHVFCSICIDLWLKNNSQCPACR). Coiled coils occupy residues 87–129 (LRKT…TILD) and 155–270 (ETVA…MNSI). At S210 the chain carries Phosphoserine. Disordered stretches follow at residues 276-334 (SADG…TSKA) and 436-460 (NVSNKDSSEDDISRSENEKKSECFS). A compositionally biased stretch (basic and acidic residues) spans 280 to 290 (KGSKGSEEDVV). Residues 304–318 (SSTSSSSHLAKPSSS) show a composition bias toward low complexity. Positions 319–334 (RLCDTSSARQESTSKA) are enriched in polar residues. Positions 446–457 (DISRSENEKKSE) are enriched in basic and acidic residues. S526, S553, S561, S568, and S570 each carry phosphoserine. 2 disordered regions span residues 570–602 (SSQGSEFLEEPDKLEEKTELNLSKGSLTNDQLE) and 687–726 (QSPWSTSFVPEKRNKNVNQSTKRKIQSSLSSASPSKATKS). Over residues 579 to 588 (EPDKLEEKTE) the composition is skewed to basic and acidic residues. Over residues 589–602 (LNLSKGSLTNDQLE) the composition is skewed to polar residues. The segment covering 713-726 (SSLSSASPSKATKS) has biased composition (low complexity). Residues S719 and S721 each carry the phosphoserine modification.

In terms of assembly, associates with ORC complex. Binds to chromatin; association is cell cycle-regulated, absent from mitotic chromosomes, is associated with chromatin from G1 and partially released from chromatin from mid S-phase. Auto-ubiquitinated.

It is found in the chromosome. It carries out the reaction S-ubiquitinyl-[E2 ubiquitin-conjugating enzyme]-L-cysteine + [acceptor protein]-L-lysine = [E2 ubiquitin-conjugating enzyme]-L-cysteine + N(6)-ubiquitinyl-[acceptor protein]-L-lysine.. In terms of biological role, E3 ubiquitin ligase essential for DNA replication origin activation during S phase. Acts as a replication origin selector which selects the origins to be fired and catalyzes the multi-mono-ubiquitination of a subset of chromatin-bound ORC3 and ORC5 during S-phase. This Homo sapiens (Human) protein is ORC ubiquitin ligase 1.